Reading from the N-terminus, the 98-residue chain is Large ribosomal subunit protein uL23 (98 aa).

It belongs to the universal ribosomal protein uL23 family. As to quaternary structure, part of the 50S ribosomal subunit. Contacts protein L29, and trigger factor when it is bound to the ribosome.

One of the early assembly proteins it binds 23S rRNA. One of the proteins that surrounds the polypeptide exit tunnel on the outside of the ribosome. Forms the main docking site for trigger factor binding to the ribosome. This Cereibacter sphaeroides (strain ATCC 17029 / ATH 2.4.9) (Rhodobacter sphaeroides) protein is Large ribosomal subunit protein uL23.